We begin with the raw amino-acid sequence, 425 residues long: GTPase Obg (425 aa).

In terms of domain architecture, Obg spans 1 to 158 (MFVDVARIYV…RWLLLELKVV (158 aa)). One can recognise an OBG-type G domain in the interval 159–330 (ADVGLVGFPN…LLEAAYDLIR (172 aa)). GTP is bound by residues 165-172 (GFPNAGKS), 190-194 (FTTLT), 212-215 (DIPG), 282-285 (NKMD), and 311-313 (SGA). Mg(2+) is bound by residues serine 172 and threonine 192. Positions 345–422 (VYRPKEEGWR…VCDIEFELMA (78 aa)) constitute an OCT domain.

The protein belongs to the TRAFAC class OBG-HflX-like GTPase superfamily. OBG GTPase family. As to quaternary structure, monomer. It depends on Mg(2+) as a cofactor.

The protein resides in the cytoplasm. Functionally, an essential GTPase which binds GTP, GDP and possibly (p)ppGpp with moderate affinity, with high nucleotide exchange rates and a fairly low GTP hydrolysis rate. Plays a role in control of the cell cycle, stress response, ribosome biogenesis and in those bacteria that undergo differentiation, in morphogenesis control. In Symbiobacterium thermophilum (strain DSM 24528 / JCM 14929 / IAM 14863 / T), this protein is GTPase Obg.